The chain runs to 103 residues: Large ribosomal subunit protein bL21 (103 aa).

The protein belongs to the bacterial ribosomal protein bL21 family. Part of the 50S ribosomal subunit. Contacts protein L20.

Functionally, this protein binds to 23S rRNA in the presence of protein L20. In Beijerinckia indica subsp. indica (strain ATCC 9039 / DSM 1715 / NCIMB 8712), this protein is Large ribosomal subunit protein bL21.